We begin with the raw amino-acid sequence, 242 residues long: Ras-like protein family member 11A (242 aa).

A small GTPase-like region spans residues 17 to 241 (ESSSDYLLPK…SSKAKAASTL (225 aa)). GTP is bound by residues 34-41 (GASCVGKS), 81-85 (DTPGG), and 147-150 (NKGD).

Belongs to the small GTPase superfamily. Ras family. In terms of assembly, interacts with UBF/UBTF.

It localises to the nucleus. It is found in the nucleolus. It catalyses the reaction GTP + H2O = GDP + phosphate + H(+). Regulator of rDNA transcription. Acts in cooperation UBF/UBTF and positively regulates RNA polymerase I transcription. In Rattus norvegicus (Rat), this protein is Ras-like protein family member 11A.